The chain runs to 285 residues: MSNICVASSKLNLPTLLRSVFRSEFTAELRPQQEPKSLFLTRPTLFTYRRVRDGRHFSSLTRSLEFQSRSPVSSHSSLLVATDVCSTPQPSESVKLSNDQVSVSHATDSTGAISTRQSANNKKGSGTRATPDLMATESDSSKTSRSQGPRVSALSSLAKSNKKRETWQIQKDALKKKFKEGWNPPKKLSPDALDGIRHLHSVAPDRFTASVLAEQFQVSPEAIRRILKSKWRPSAEEMEERRERWDRRHDRIWSQMTELGLRPKSRRANQYSDAKVLYDDSGKQE.

2 stretches are compositionally biased toward polar residues: residues Q89 to R128 and E137 to P149. Residues Q89–E165 form a disordered region.

Belongs to the RRG9 family.

It localises to the mitochondrion. Required for respiratory activity and maintenance and expression of the mitochondrial genome. The polypeptide is Required for respiratory growth protein 9, mitochondrial (rrg9) (Aspergillus clavatus (strain ATCC 1007 / CBS 513.65 / DSM 816 / NCTC 3887 / NRRL 1 / QM 1276 / 107)).